Reading from the N-terminus, the 95-residue chain is DNA-directed RNA polymerase subunit Rpo6 (95 aa).

This sequence belongs to the archaeal Rpo6/eukaryotic RPB6 RNA polymerase subunit family. As to quaternary structure, part of the RNA polymerase complex.

It localises to the cytoplasm. It catalyses the reaction RNA(n) + a ribonucleoside 5'-triphosphate = RNA(n+1) + diphosphate. Its function is as follows. DNA-dependent RNA polymerase (RNAP) catalyzes the transcription of DNA into RNA using the four ribonucleoside triphosphates as substrates. The chain is DNA-directed RNA polymerase subunit Rpo6 from Saccharolobus islandicus (strain M.16.27) (Sulfolobus islandicus).